We begin with the raw amino-acid sequence, 423 residues long: tRNA(Met) cytidine acetate ligase (423 aa).

Residues 7-20, G102, N165, and R190 contribute to the ATP site; that span reads VVEYNPFHNGHLYH.

Belongs to the TmcAL family.

It localises to the cytoplasm. It carries out the reaction cytidine(34) in elongator tRNA(Met) + acetate + ATP = N(4)-acetylcytidine(34) in elongator tRNA(Met) + AMP + diphosphate. Functionally, catalyzes the formation of N(4)-acetylcytidine (ac(4)C) at the wobble position of elongator tRNA(Met), using acetate and ATP as substrates. First activates an acetate ion to form acetyladenylate (Ac-AMP) and then transfers the acetyl group to tRNA to form ac(4)C34. This chain is tRNA(Met) cytidine acetate ligase, found in Thermosipho africanus (strain TCF52B).